Consider the following 60-residue polypeptide: UPF0291 protein Nther_1806 (60 aa).

This sequence belongs to the UPF0291 family.

It is found in the cytoplasm. This is UPF0291 protein Nther_1806 from Natranaerobius thermophilus (strain ATCC BAA-1301 / DSM 18059 / JW/NM-WN-LF).